A 257-amino-acid polypeptide reads, in one-letter code: Receptor expression-enhancing protein 4 (257 aa).

A run of 2 helical transmembrane segments spans residues 1 to 21 (MVSW…YPAY) and 42 to 62 (WIVF…ISWF). Phosphoserine is present on residues S152 and S194. The disordered stretch occupies residues 159-257 (IPDTSAPTYQ…KKTIPSDLDS (99 aa)). At T196 the chain carries Phosphothreonine. At S202 the chain carries Phosphoserine. The residue at position 250 (T250) is a Phosphothreonine. S253 is modified (phosphoserine).

It belongs to the DP1 family.

The protein localises to the endoplasmic reticulum membrane. In terms of biological role, microtubule-binding protein required to ensure proper cell division and nuclear envelope reassembly by sequestering the endoplasmic reticulum away from chromosomes during mitosis. Probably acts by clearing the endoplasmic reticulum membrane from metaphase chromosomes. This chain is Receptor expression-enhancing protein 4 (Reep4), found in Rattus norvegicus (Rat).